The chain runs to 389 residues: Lipid-A-disaccharide synthase (389 aa).

Belongs to the LpxB family.

The catalysed reaction is a lipid X + a UDP-2-N,3-O-bis[(3R)-3-hydroxyacyl]-alpha-D-glucosamine = a lipid A disaccharide + UDP + H(+). The protein operates within bacterial outer membrane biogenesis; LPS lipid A biosynthesis. In terms of biological role, condensation of UDP-2,3-diacylglucosamine and 2,3-diacylglucosamine-1-phosphate to form lipid A disaccharide, a precursor of lipid A, a phosphorylated glycolipid that anchors the lipopolysaccharide to the outer membrane of the cell. This Burkholderia cenocepacia (strain ATCC BAA-245 / DSM 16553 / LMG 16656 / NCTC 13227 / J2315 / CF5610) (Burkholderia cepacia (strain J2315)) protein is Lipid-A-disaccharide synthase.